The following is a 496-amino-acid chain: Probable cytosol aminopeptidase (496 aa).

Residues Lys-251 and Asp-256 each coordinate Mn(2+). Lys-263 is a catalytic residue. 3 residues coordinate Mn(2+): Asp-274, Asp-333, and Glu-335. Arg-337 is a catalytic residue.

The protein belongs to the peptidase M17 family. Mn(2+) is required as a cofactor.

The protein localises to the cytoplasm. The catalysed reaction is Release of an N-terminal amino acid, Xaa-|-Yaa-, in which Xaa is preferably Leu, but may be other amino acids including Pro although not Arg or Lys, and Yaa may be Pro. Amino acid amides and methyl esters are also readily hydrolyzed, but rates on arylamides are exceedingly low.. The enzyme catalyses Release of an N-terminal amino acid, preferentially leucine, but not glutamic or aspartic acids.. Presumably involved in the processing and regular turnover of intracellular proteins. Catalyzes the removal of unsubstituted N-terminal amino acids from various peptides. The chain is Probable cytosol aminopeptidase from Acidovorax sp. (strain JS42).